A 306-amino-acid chain; its full sequence is UDP-N-acetylenolpyruvoylglucosamine reductase (306 aa).

Residues 30–216 enclose the FAD-binding PCMH-type domain; it reads RIGGPVPYIL…KSKLIDFSTR (187 aa). Arginine 180 is an active-site residue. Catalysis depends on serine 230, which acts as the Proton donor. Glutamate 301 is an active-site residue.

It belongs to the MurB family. It depends on FAD as a cofactor.

It is found in the cytoplasm. The enzyme catalyses UDP-N-acetyl-alpha-D-muramate + NADP(+) = UDP-N-acetyl-3-O-(1-carboxyvinyl)-alpha-D-glucosamine + NADPH + H(+). The protein operates within cell wall biogenesis; peptidoglycan biosynthesis. Functionally, cell wall formation. This chain is UDP-N-acetylenolpyruvoylglucosamine reductase, found in Petrotoga mobilis (strain DSM 10674 / SJ95).